The chain runs to 187 residues: MPEVERKPKITASRKLLLKSLMLAKAKECWEQEHEEREAEKVRYLAERIPTLQTRGLSLSALQDLCRELHAKVEVVDEERYDIEAKCLHNTREIKDLKLKVMDLRGKFKRPPLRRVRVSADAMLRALLGSKHKVSMDLRANLKSVKKEDTEKERPVEVGDWRKNVEAMSGMEGRKKMFDAAKSPTSQ.

Pro-2 carries the post-translational modification N-acetylproline. The segment at 2 to 48 (PEVERKPKITASRKLLLKSLMLAKAKECWEQEHEEREAEKVRYLAER) is involved in binding TNC. Ser-58 carries the post-translational modification Phosphoserine. An involved in binding TNC and actin region spans residues 97 to 118 (LKLKVMDLRGKFKRPPLRRVRV).

It belongs to the troponin I family. In terms of assembly, binds to actin and tropomyosin. Highest levels observed in human skeletal muscle (e.g. gastrocnemious muscle), differentiated cultures of primary human muscle cells and rhabdomyosarcoma cells cultured in low serum medium. Expressed in C2 muscle cell myoblasts and myotubes.

Troponin I is the inhibitory subunit of troponin, the thin filament regulatory complex which confers calcium-sensitivity to striated muscle actomyosin ATPase activity. The sequence is that of Troponin I, slow skeletal muscle (TNNI1) from Homo sapiens (Human).